Reading from the N-terminus, the 591-residue chain is Lipoprotein LpqB (591 aa).

Positions Met-1 to Gly-20 are cleaved as a signal peptide. Cys-21 carries the N-palmitoyl cysteine lipid modification. The S-diacylglycerol cysteine moiety is linked to residue Cys-21.

Belongs to the LpqB lipoprotein family.

Its subcellular location is the cell membrane. This is Lipoprotein LpqB from Cutibacterium acnes (strain DSM 16379 / KPA171202) (Propionibacterium acnes).